Here is a 212-residue protein sequence, read N- to C-terminus: Ribosomal RNA large subunit methyltransferase E (212 aa).

5 residues coordinate S-adenosyl-L-methionine: Gly57, Trp59, Asp77, Asp93, and Asp122. Lys162 functions as the Proton acceptor in the catalytic mechanism.

It belongs to the class I-like SAM-binding methyltransferase superfamily. RNA methyltransferase RlmE family.

The protein resides in the cytoplasm. It catalyses the reaction uridine(2552) in 23S rRNA + S-adenosyl-L-methionine = 2'-O-methyluridine(2552) in 23S rRNA + S-adenosyl-L-homocysteine + H(+). Specifically methylates the uridine in position 2552 of 23S rRNA at the 2'-O position of the ribose in the fully assembled 50S ribosomal subunit. This chain is Ribosomal RNA large subunit methyltransferase E, found in Coxiella burnetii (strain RSA 493 / Nine Mile phase I).